The primary structure comprises 370 residues: High affinity iron permease ftrA (370 aa).

The next 7 membrane-spanning stretches (helical) occupy residues 5 to 25, 52 to 72, 88 to 108, 148 to 168, 179 to 199, 206 to 226, and 293 to 313; these read VFAV…SIIV, VWWG…GMIG, LWEG…GAAL, AMFL…VVFI, AFPL…YLLY, SLQI…AGLF, and YGSV…FVAM. Residues 335–370 are disordered; the sequence is RKSAEPGNGEQDVEVSTIPSDLQTESKIPKSGASLV. Over residues 351-360 the composition is skewed to polar residues; the sequence is TIPSDLQTES.

The protein belongs to the oxidase-dependent Fe transporter (OFeT) (TC 9.A.10.1) family.

The protein resides in the cell membrane. In terms of biological role, high affinity iron permease; part of the reductive iron assimilatory system (RIA), a siderophore-independent high affinity iron uptake mechanism. In Aspergillus fumigatus (strain ATCC MYA-4609 / CBS 101355 / FGSC A1100 / Af293) (Neosartorya fumigata), this protein is High affinity iron permease ftrA.